Consider the following 195-residue polypeptide: Ribonuclease HII (195 aa).

The region spanning 1–195 is the RNase H type-2 domain; that stretch reads MICGIDEAGR…SWRTLRYLNT (195 aa). The a divalent metal cation site is built by aspartate 6, glutamate 7, and aspartate 101.

This sequence belongs to the RNase HII family. Mn(2+) is required as a cofactor. The cofactor is Mg(2+).

The protein localises to the cytoplasm. The enzyme catalyses Endonucleolytic cleavage to 5'-phosphomonoester.. Functionally, endonuclease that specifically degrades the RNA of RNA-DNA hybrids. The polypeptide is Ribonuclease HII (Pyrobaculum islandicum (strain DSM 4184 / JCM 9189 / GEO3)).